A 255-amino-acid chain; its full sequence is uncharacterized protein (255 aa).

The first 23 residues, 1–23 (MKRLNKLVLGIIFLFLVISITAG), serve as a signal peptide directing secretion. C24 is lipidated: N-palmitoyl cysteine. C24 carries S-diacylglycerol cysteine lipidation.

The protein belongs to the staphylococcal tandem lipoprotein family.

It localises to the cell membrane. This is an uncharacterized protein from Staphylococcus aureus (strain Mu50 / ATCC 700699).